The chain runs to 293 residues: Phycoerythrin class 2 subunit gamma, linker polypeptide (293 aa).

Residue cysteine 49 coordinates phycourobilin. One can recognise a PBS-linker domain in the interval 50-229; that stretch reads AAMGIGIGPR…LGGMKVAISD (180 aa).

Contains one covalently linked phycourobilin chromophore.

It localises to the cellular thylakoid membrane. In terms of biological role, this protein is a bile pigment-bearing rod linker polypeptide that associates with C-phycoerythrin. This is Phycoerythrin class 2 subunit gamma, linker polypeptide (mpeC) from Synechococcus sp. (strain WH8020).